The chain runs to 267 residues: Undecaprenyl-diphosphatase (267 aa).

The next 7 membrane-spanning stretches (helical) occupy residues M1–I21, G40–W60, L85–V105, L112–A132, A189–I209, D219–F239, and V245–A265.

It belongs to the UppP family.

Its subcellular location is the cell inner membrane. The catalysed reaction is di-trans,octa-cis-undecaprenyl diphosphate + H2O = di-trans,octa-cis-undecaprenyl phosphate + phosphate + H(+). Its function is as follows. Catalyzes the dephosphorylation of undecaprenyl diphosphate (UPP). Confers resistance to bacitracin. In Jannaschia sp. (strain CCS1), this protein is Undecaprenyl-diphosphatase.